Reading from the N-terminus, the 432-residue chain is Amino-acid acetyltransferase (432 aa).

The N-acetyltransferase domain maps to 286–425; it reads ELVREAAIED…ASLYNYQRNS (140 aa).

This sequence belongs to the acetyltransferase family. ArgA subfamily.

Its subcellular location is the cytoplasm. It carries out the reaction L-glutamate + acetyl-CoA = N-acetyl-L-glutamate + CoA + H(+). Its pathway is amino-acid biosynthesis; L-arginine biosynthesis; N(2)-acetyl-L-ornithine from L-glutamate: step 1/4. The polypeptide is Amino-acid acetyltransferase (Pseudomonas fluorescens (strain Pf0-1)).